The chain runs to 187 residues: UPF0301 protein YPO0936/y3322/YP_3506 (187 aa).

This sequence belongs to the UPF0301 (AlgH) family.

The polypeptide is UPF0301 protein YPO0936/y3322/YP_3506 (Yersinia pestis).